Consider the following 401-residue polypeptide: MSEQQPLPTLPMWRVDHIEPSPEMLALRANGPIHRVRFPSGHEGWWVTGYDEAKAVLSDAAFRPAGMPPAAFTPDSVILGSPGWLVSHEGREHARLRAIVAPAFSDRRVKLLVQQVEAIAAHLFETLAAQPQPADLRRHLSFPLPAMVISALMGVLYEDHAFFAGLSDEVMTHQHESGPRSASRLAWEELRAYIRGKMRDKRQDPDDNLLTDLLAAVDQGKASEEEAVGLAAGMLVAGHESTVAQIEFGLLAMFRHPQQRERLVGDPSLVDKAVEEILRMYPPGAGWDGIMRYPRTDVTIAGEHIPAESKVLVGLPATSFDPHHFDDPEIFDIERQEKPHLAFSYGPHACIGVALARLELKVVFGSIFQRLPALRLAVAPEQLKLRKEIITGGFEQFPVLW.

Cysteine 350 serves as a coordination point for heme.

This sequence belongs to the cytochrome P450 family. It depends on heme as a cofactor.

In terms of biological role, cytochromes P450 are a group of heme-thiolate monooxygenases. They oxidize a variety of structurally unrelated compounds, including steroids, fatty acids, and xenobiotics. This Bradyrhizobium diazoefficiens (strain JCM 10833 / BCRC 13528 / IAM 13628 / NBRC 14792 / USDA 110) protein is Cytochrome P450 BJ-1 (cyp112).